The chain runs to 578 residues: Vesicular acetylcholine transporter (578 aa).

The Cytoplasmic segment spans residues 1 to 32; the sequence is MASFQIPVINLEVREVKDIVWEKIQEPVNQRR. The chain crosses the membrane as a helical span at residues 33–53; that stretch reads LILVIVSIALLLDNMLYMVIV. The Lumenal, vesicle segment spans residues 54–98; the sequence is PIIPDYLREIGSFDDGPTPPPLRDNITGKIIPVHHDHHGQDSATG. A glycan (N-linked (GlcNAc...) asparagine) is linked at asparagine 78. Residues 99–119 traverse the membrane as a helical segment; the sequence is ILFASKAIVQLMVNPFSGGLI. Residues 120–125 lie on the Cytoplasmic side of the membrane; the sequence is DKIGYD. Residues 126–146 form a helical membrane-spanning segment; sequence LPMMIGLTIMFFSTAVFACGS. The Lumenal, vesicle segment spans residues 147–154; the sequence is SYSVLFFA. The helical transmembrane segment at 155–175 threads the bilayer; it reads RSLQGAGSAFADTAGLAMIAD. At 176-187 the chain is on the cytoplasmic side; it reads RFTEENERSQAL. A helical transmembrane segment spans residues 188-208; the sequence is GIALAFISFGCLVAPPFGGAL. Residues 209-215 are Lumenal, vesicle-facing; it reads YQFAGKE. Residues 216–236 traverse the membrane as a helical segment; the sequence is VPFLILALVCLLDGLMLLLVM. Residues 237–263 are Cytoplasmic-facing; sequence KPVKEAMKQSKDVQDQVIPIWRLLMDP. The chain crosses the membrane as a helical span at residues 264–284; it reads YIAVCAGALTMSNVALAFLEP. Topologically, residues 285-299 are lumenal, vesicle; sequence TISLWMEDNMTTDNW. Residue asparagine 293 is glycosylated (N-linked (GlcNAc...) asparagine). The chain crosses the membrane as a helical span at residues 300-320; that stretch reads KIGMVWLPAFFPHVLGVVITV. The Cytoplasmic segment spans residues 321 to 330; the sequence is KMARKYPQHQ. A helical membrane pass occupies residues 331–351; that stretch reads WLMAAGGLALEGFSCFIIPFC. Over 352 to 355 the chain is Lumenal, vesicle; that stretch reads SGYK. The helical transmembrane segment at 356-376 threads the bilayer; that stretch reads MLMLPICVICFGIALIDTALL. Over 377 to 387 the chain is Cytoplasmic; that stretch reads PTLGYLVDVRY. A helical transmembrane segment spans residues 388–408; it reads VSVYGSIYAIADISYSIAYAV. Residues 409 to 413 are Lumenal, vesicle-facing; sequence GPIIA. The chain crosses the membrane as a helical span at residues 414-434; that stretch reads GGVVEAIGFTALNFLIAFSNL. Over 435–578 the chain is Cytoplasmic; the sequence is AYVPVLRKLR…APANPFRQGF (144 aa). 2 stretches are compositionally biased toward low complexity: residues 507-534 and 549-563; these read EYQQ…EQGG and QQQQ…QQVQ. The tract at residues 507-578 is disordered; it reads EYQQQQQGYQ…APANPFRQGF (72 aa).

It belongs to the major facilitator superfamily. Vesicular transporter family.

It is found in the membrane. In terms of biological role, involved in acetylcholine transport into synaptic vesicles. The protein is Vesicular acetylcholine transporter (VAChT) of Drosophila melanogaster (Fruit fly).